Consider the following 305-residue polypeptide: Porphobilinogen deaminase (305 aa).

Position 243 is an S-(dipyrrolylmethanemethyl)cysteine (Cys-243).

Belongs to the HMBS family. In terms of assembly, monomer. The cofactor is dipyrromethane.

The enzyme catalyses 4 porphobilinogen + H2O = hydroxymethylbilane + 4 NH4(+). It participates in porphyrin-containing compound metabolism; protoporphyrin-IX biosynthesis; coproporphyrinogen-III from 5-aminolevulinate: step 2/4. In terms of biological role, tetrapolymerization of the monopyrrole PBG into the hydroxymethylbilane pre-uroporphyrinogen in several discrete steps. The polypeptide is Porphobilinogen deaminase (Limosilactobacillus reuteri (strain DSM 20016) (Lactobacillus reuteri)).